A 301-amino-acid polypeptide reads, in one-letter code: NADH-cytochrome b5 reductase 2 (301 aa).

The helical transmembrane segment at 14 to 30 (FLVPFAGATALSIGLAL) threads the bilayer. The region spanning 51-155 (NEWVDLKLSK…KGPIVKWKWE (105 aa)) is the FAD-binding FR-type domain. Residue 158 to 193 (QFKSIALIGGGTGITPLYQLLHQITSNPKDNTKVNL) coordinates FAD.

The protein belongs to the flavoprotein pyridine nucleotide cytochrome reductase family. Requires FAD as cofactor.

The protein localises to the mitochondrion outer membrane. The enzyme catalyses 2 Fe(III)-[cytochrome b5] + NADH = 2 Fe(II)-[cytochrome b5] + NAD(+) + H(+). Functionally, may mediate the reduction of outer membrane cytochrome b5. The protein is NADH-cytochrome b5 reductase 2 (MCR1) of Candida albicans (strain SC5314 / ATCC MYA-2876) (Yeast).